A 74-amino-acid polypeptide reads, in one-letter code: Large ribosomal subunit protein bL27c (74 aa).

The protein belongs to the bacterial ribosomal protein bL27 family.

It is found in the plastid. The protein localises to the chloroplast. This chain is Large ribosomal subunit protein bL27c (rpl27), found in Calyptrosphaera sphaeroidea.